We begin with the raw amino-acid sequence, 657 residues long: 1-deoxy-D-xylulose-5-phosphate synthase (657 aa).

His-73 provides a ligand contact to thiamine diphosphate. A disordered region spans residues 91–110; that stretch reads RQEGGMSGYPDRGESEHDIV. The segment covering 101–110 has biased composition (basic and acidic residues); that stretch reads DRGESEHDIV. Position 113–115 (113–115) interacts with thiamine diphosphate; that stretch reads SHA. Asp-145 is a binding site for Mg(2+). Thiamine diphosphate is bound by residues 146 to 147, Asn-175, Tyr-293, and Glu-375; that span reads GA. Asn-175 contacts Mg(2+).

This sequence belongs to the transketolase family. DXPS subfamily. In terms of assembly, homodimer. Requires Mg(2+) as cofactor. The cofactor is thiamine diphosphate.

The catalysed reaction is D-glyceraldehyde 3-phosphate + pyruvate + H(+) = 1-deoxy-D-xylulose 5-phosphate + CO2. The protein operates within metabolic intermediate biosynthesis; 1-deoxy-D-xylulose 5-phosphate biosynthesis; 1-deoxy-D-xylulose 5-phosphate from D-glyceraldehyde 3-phosphate and pyruvate: step 1/1. Functionally, catalyzes the acyloin condensation reaction between C atoms 2 and 3 of pyruvate and glyceraldehyde 3-phosphate to yield 1-deoxy-D-xylulose-5-phosphate (DXP). This is 1-deoxy-D-xylulose-5-phosphate synthase from Arthrobacter sp. (strain FB24).